We begin with the raw amino-acid sequence, 76 residues long: Conotoxin VnMEKL-021 (76 aa).

The first 19 residues, Met1–Ala19, serve as a signal peptide directing secretion. The propeptide occupies Leu20 to Ser37. Cystine bridges form between Cys51–Cys65, Cys58–Cys69, and Cys64–Cys73.

The protein belongs to the conotoxin O2 superfamily. Expressed by the venom duct.

Its subcellular location is the secreted. The polypeptide is Conotoxin VnMEKL-021 (Conus ventricosus (Mediterranean cone)).